The chain runs to 197 residues: Imidazoleglycerol-phosphate dehydratase (197 aa).

The protein belongs to the imidazoleglycerol-phosphate dehydratase family.

It is found in the cytoplasm. The enzyme catalyses D-erythro-1-(imidazol-4-yl)glycerol 3-phosphate = 3-(imidazol-4-yl)-2-oxopropyl phosphate + H2O. It functions in the pathway amino-acid biosynthesis; L-histidine biosynthesis; L-histidine from 5-phospho-alpha-D-ribose 1-diphosphate: step 6/9. This Chromohalobacter salexigens (strain ATCC BAA-138 / DSM 3043 / CIP 106854 / NCIMB 13768 / 1H11) protein is Imidazoleglycerol-phosphate dehydratase.